We begin with the raw amino-acid sequence, 3329 residues long: Breast cancer type 2 susceptibility protein homolog (3329 aa).

The interaction with PALB2 stretch occupies residues 1-40 (MPVEYKRRPTFWEIFKARCSTADLGPISLNWFEELSSEAP). Disordered regions lie at residues 37–69 (SEAPPYNSEPPEESEYKPHGYEPQLFKTPQRNP) and 207–241 (EARSSVTPADSPATLKSCFSNHNESPQKNDRSVPS). Serine 435 and serine 481 each carry phosphoserine. Residues 628-650 (PDSSDKKRCLPNDPEEPSLTNSF) are disordered. Residues 628-979 (PDSSDKKRCL…DKWSEFLDPV (352 aa)) are interaction with NPM1. Residue serine 735 is modified to Phosphoserine. The span at 934 to 953 (EKSRNNIEQHQKGTEDKDFK) shows a compositional bias: basic and acidic residues. Residues 934-965 (EKSRNNIEQHQKGTEDKDFKSNSSLNMKSDGN) are disordered. The span at 954–965 (SNSSLNMKSDGN) shows a compositional bias: polar residues. BRCA2 repeat units lie at residues 981 to 1015 (NHNFGGSFRTASNKEIKLSEHNVKKSKMFFKDIEE) and 1192 to 1226 (NEMEFGGFCSALGTKLSVSNEALRKAMKLFSDIEN). Positions 982–2035 (HNFGGSFRTA…LHKVKGMLEE (1054 aa)) are interaction with RAD51. The segment at 1296–1340 (NTKHEDSYTSSQRNNLENSDGSMSSTSGPVYIHKGDSDLPADQGS) is disordered. Residues 1303 to 1323 (YTSSQRNNLENSDGSMSSTSG) show a composition bias toward polar residues. BRCA2 repeat units follow at residues 1394 to 1428 (IKEFNISFQTASGKNTRVSKESLNKSVNIFNRETD), 1491 to 1525 (KEPTLLSFHTASGKKVKIMQESLDKVKNLFDETQY), 1623 to 1657 (TEDSALAYYTEDSRKTCVRESSLSKGRKWLREQGD), 1924 to 1958 (PSRTYGIFSTASGKAIQVSDASLEKARQVFSEMDG), and 2004 to 2038 (NSSVFSGFSTAGGKLVTVSESALHKVKGMLEEFDL). Serine 2048 is modified (phosphoserine). Residues 2073–2099 (NSKLQKTYNDKSSLPSNYKESGSSGNT) form a disordered region. Polar residues predominate over residues 2074–2099 (SKLQKTYNDKSSLPSNYKESGSSGNT). Residues 2219 to 2285 (KRGGVTVDAV…EPVTCGPFCS (67 aa)) form an interaction with HSF2BP region. Positions 2298 to 2466 (TSPAQELLSK…SPKQLYIYGV (169 aa)) are interaction with FANCD2. The disordered stretch occupies residues 2361–2393 (FHGDEHFNSKNVNLEGKNQKSTDGDREDGNDSH). A compositionally biased stretch (basic and acidic residues) spans 2377–2393 (KNQKSTDGDREDGNDSH). An interaction with SEM1 region spans residues 2402–2753 (MSSLQSARDL…QRVYPLQWVE (352 aa)). Residues 2603 to 2619 (AAKTLVLCISDIISPST) carry the Nuclear export signal; masked by interaction with SEM1 motif. Serine 3214 carries the phosphoserine; by CDK1 and CDK2 modification. 2 disordered regions span residues 3221–3257 (FQPPRSCGTKYATPIKKEPSSPRRRTPFQKTSGVSLP) and 3273–3329 (QALT…AVES). A Phosphoserine modification is found at serine 3241. Residues 3309-3329 (SRKESLRDCRGDSSEKLAVES) are compositionally biased toward basic and acidic residues.

As to quaternary structure, monomer and dimer. Interacts with RAD51; regulates RAD51 recruitment and function at sites of DNA repair. Interacts with SEM1, WDR16, USP11, DMC1, ROCK2 and NPM1. Interacts with both nonubiquitinated and monoubiquitinated FANCD2; this complex also includes XRCC3 and phosphorylated FANCG. Part of a BRCA complex containing BRCA1, BRCA2 and PALB2. Component of the homologous recombination repair (HR) complex composed of ERCC5/XPG, BRCA2, PALB2, DSS1 and RAD51. Within the complex, interacts with ERCC5/XPG and PALB2. Interacts directly with PALB2 which may serve as a scaffold for a HR complex containing PALB2, BRCA2, RAD51C, RAD51 and XRCC3. Interacts with BRCA1 only in the presence of PALB2 which serves as the bridging protein. Interacts with POLH; the interaction is direct. Interacts with the TREX-2 complex subunits PCID2 and SEM1. Interacts with HSF2BP and BRME1; the interaction with HSF2BP is direct and allows the formation of a ternary complex. The complex BRME1:HSF2BP:BRCA2 interacts with SPATA22, MEIOB and RAD51. Phosphorylated by ATM upon irradiation-induced DNA damage. Phosphorylation by CHEK1 and CHEK2 regulates interaction with RAD51. Phosphorylation at Ser-3291 by CDK1 and CDK2 is low in S phase when recombination is active, but increases as cells progress towards mitosis; this phosphorylation prevents homologous recombination-dependent repair during S phase and G2 by inhibiting RAD51 binding. Post-translationally, ubiquitinated in the absence of DNA damage; this does not lead to proteasomal degradation. In contrast, ubiquitination in response to DNA damage leads to proteasomal degradation. As to expression, widely expressed. Highest expression in cerebellum, testis, ileum, appendix, epididymis, ovary and mammary gland. No expression in lung.

Its subcellular location is the nucleus. It localises to the cytoplasm. The protein resides in the cytoskeleton. It is found in the microtubule organizing center. The protein localises to the centrosome. Functionally, involved in double-strand break repair and/or homologous recombination. Binds RAD51 and potentiates recombinational DNA repair by promoting assembly of RAD51 onto single-stranded DNA (ssDNA). Acts by targeting RAD51 to ssDNA over double-stranded DNA, enabling RAD51 to displace replication protein-A (RPA) from ssDNA and stabilizing RAD51-ssDNA filaments by blocking ATP hydrolysis. Part of a PALB2-scaffolded HR complex containing RAD51C and which is thought to play a role in DNA repair by HR. May participate in S phase checkpoint activation. Binds selectively to ssDNA, and to ssDNA in tailed duplexes and replication fork structures. May play a role in the extension step after strand invasion at replication-dependent DNA double-strand breaks; together with PALB2 is involved in both POLH localization at collapsed replication forks and DNA polymerization activity. In concert with NPM1, regulates centrosome duplication. Interacts with the TREX-2 complex (transcription and export complex 2) subunits PCID2 and SEM1, and is required to prevent R-loop-associated DNA damage and thus transcription-associated genomic instability, independently of its known role in homologous recombination. In Mus musculus (Mouse), this protein is Breast cancer type 2 susceptibility protein homolog.